Consider the following 136-residue polypeptide: Small ribosomal subunit protein eS6 (136 aa).

The protein belongs to the eukaryotic ribosomal protein eS6 family.

In Methanosarcina acetivorans (strain ATCC 35395 / DSM 2834 / JCM 12185 / C2A), this protein is Small ribosomal subunit protein eS6.